Consider the following 509-residue polypeptide: ATP synthase subunit alpha (509 aa).

An ATP-binding site is contributed by 171–178 (GDRKTGKT).

This sequence belongs to the ATPase alpha/beta chains family. As to quaternary structure, F-type ATPases have 2 components, CF(1) - the catalytic core - and CF(0) - the membrane proton channel. CF(1) has five subunits: alpha(3), beta(3), gamma(1), delta(1), epsilon(1). CF(0) has three main subunits: a(1), b(2) and c(9-12). The alpha and beta chains form an alternating ring which encloses part of the gamma chain. CF(1) is attached to CF(0) by a central stalk formed by the gamma and epsilon chains, while a peripheral stalk is formed by the delta and b chains.

Its subcellular location is the cell inner membrane. It catalyses the reaction ATP + H2O + 4 H(+)(in) = ADP + phosphate + 5 H(+)(out). Functionally, produces ATP from ADP in the presence of a proton gradient across the membrane. The alpha chain is a regulatory subunit. This is ATP synthase subunit alpha from Ehrlichia canis (strain Jake).